A 63-amino-acid polypeptide reads, in one-letter code: Large ribosomal subunit protein eL37 (63 aa).

Residues C20, C23, C35, and C38 each contribute to the Zn(2+) site. A C4-type zinc finger spans residues 20 to 38 (CRRCGHHSFNVRKGYCAHC).

The protein belongs to the eukaryotic ribosomal protein eL37 family. It depends on Zn(2+) as a cofactor.

Binds to the 23S rRNA. This chain is Large ribosomal subunit protein eL37, found in Thermofilum pendens (strain DSM 2475 / Hrk 5).